The chain runs to 457 residues: F-box/LRR-repeat protein At2g42730 (457 aa).

One can recognise an F-box domain in the interval 4–50 (KDVISRLPDEVLGRILSLISTKEAVSTSVLSKRWKNMFVLVSNLDID). 3 LRR repeats span residues 265-288 (MDETRMVGVRNGSLGSIPADMRNL), 292-315 (IRNVRILHLSSHTLELLYFSCKEM), and 318-343 (FDSLVSLSIGNDKARGWQMLPLLIKN).

The protein is F-box/LRR-repeat protein At2g42730 of Arabidopsis thaliana (Mouse-ear cress).